Consider the following 45-residue polypeptide: Lysis protein for colicin E1* (45 aa).

An N-terminal signal peptide occupies residues 1–17 (MRKRFFVGIFAINLLVG). Cys-18 carries N-palmitoyl cysteine lipidation. A lipid anchor (S-diacylglycerol cysteine) is attached at Cys-18.

The protein localises to the cell outer membrane. Its function is as follows. Lysis proteins are required for both colicin release and partial cell lysis. This chain is Lysis protein for colicin E1* (kil), found in Shigella sonnei.